Reading from the N-terminus, the 346-residue chain is Phenylalanine--tRNA ligase alpha subunit (346 aa).

A Mg(2+)-binding site is contributed by glutamate 264.

It belongs to the class-II aminoacyl-tRNA synthetase family. Phe-tRNA synthetase alpha subunit type 1 subfamily. In terms of assembly, tetramer of two alpha and two beta subunits. Mg(2+) is required as a cofactor.

The protein resides in the cytoplasm. It catalyses the reaction tRNA(Phe) + L-phenylalanine + ATP = L-phenylalanyl-tRNA(Phe) + AMP + diphosphate + H(+). This Leifsonia xyli subsp. xyli (strain CTCB07) protein is Phenylalanine--tRNA ligase alpha subunit.